Reading from the N-terminus, the 249-residue chain is Isoamyl acetate-hydrolyzing esterase 1 homolog (249 aa).

The active-site Nucleophile is S24. Position 63 is an N6-succinyllysine (K63). Catalysis depends on D197, which acts as the Proton donor. The Proton acceptor role is filled by H200.

It belongs to the 'GDSL' lipolytic enzyme family. IAH1 subfamily.

Its function is as follows. Probable lipase. This Bos taurus (Bovine) protein is Isoamyl acetate-hydrolyzing esterase 1 homolog (IAH1).